A 283-amino-acid chain; its full sequence is Formamidopyrimidine-DNA glycosylase (283 aa).

The active-site Schiff-base intermediate with DNA is the P2. E3 functions as the Proton donor in the catalytic mechanism. The Proton donor; for beta-elimination activity role is filled by K61. DNA contacts are provided by H94, R113, and K159. Residues D245 to P279 form an FPG-type zinc finger. R269 acts as the Proton donor; for delta-elimination activity in catalysis.

Belongs to the FPG family. In terms of assembly, monomer. Requires Zn(2+) as cofactor.

It catalyses the reaction Hydrolysis of DNA containing ring-opened 7-methylguanine residues, releasing 2,6-diamino-4-hydroxy-5-(N-methyl)formamidopyrimidine.. The enzyme catalyses 2'-deoxyribonucleotide-(2'-deoxyribose 5'-phosphate)-2'-deoxyribonucleotide-DNA = a 3'-end 2'-deoxyribonucleotide-(2,3-dehydro-2,3-deoxyribose 5'-phosphate)-DNA + a 5'-end 5'-phospho-2'-deoxyribonucleoside-DNA + H(+). Functionally, involved in base excision repair of DNA damaged by oxidation or by mutagenic agents. Acts as a DNA glycosylase that recognizes and removes damaged bases. Has a preference for oxidized purines, such as 7,8-dihydro-8-oxoguanine (8-oxoG). Has AP (apurinic/apyrimidinic) lyase activity and introduces nicks in the DNA strand. Cleaves the DNA backbone by beta-delta elimination to generate a single-strand break at the site of the removed base with both 3'- and 5'-phosphates. This chain is Formamidopyrimidine-DNA glycosylase, found in Mycolicibacterium paratuberculosis (strain ATCC BAA-968 / K-10) (Mycobacterium paratuberculosis).